Consider the following 103-residue polypeptide: Zinc-containing ferredoxin (103 aa).

An N-terminal extension region spans residues 1–36 (GIDPNYRTSKPVVGDHSGHKIYGPVESPKVLGVHGT). His-19 contributes to the Zn(2+) binding site. Lys-29 bears the N6-methyllysine mark. Position 34 (His-34) interacts with Zn(2+). 2 consecutive 4Fe-4S ferredoxin-type domains span residues 35–65 (GTIVGVDFDLCIADGSCITACPVNVFQWYET) and 74–103 (KADPVNEQACIFCMACVNVCPVAAIDVKPP). Positions 45 and 51 each coordinate [3Fe-4S] cluster. Cys-55 contacts [4Fe-4S] cluster. A Zn(2+)-binding site is contributed by Asp-76. Positions 83, 86, and 89 each coordinate [4Fe-4S] cluster. Cys-93 is a [3Fe-4S] cluster binding site.

The cofactor is [3Fe-4S] cluster. [4Fe-4S] cluster serves as cofactor. Requires Zn(2+) as cofactor.

Functionally, ferredoxins are iron-sulfur proteins that transfer electrons in a wide variety of metabolic reactions. The chain is Zinc-containing ferredoxin (zfx) from Sulfolobus acidocaldarius (strain ATCC 33909 / DSM 639 / JCM 8929 / NBRC 15157 / NCIMB 11770).